We begin with the raw amino-acid sequence, 372 residues long: Probable leucine aminopeptidase MCYG_08380 (372 aa).

The first 19 residues, 1–19 (MKVSVLAAVAAFAAATAIA), serve as a signal peptide directing secretion. A glycan (N-linked (GlcNAc...) asparagine) is linked at N96. Zn(2+) contacts are provided by H175 and D194. N-linked (GlcNAc...) asparagine glycosylation is found at N195 and N219. Zn(2+)-binding residues include E233 and D260. Cysteines 305 and 309 form a disulfide. H338 lines the Zn(2+) pocket.

The protein belongs to the peptidase M28 family. M28E subfamily. In terms of assembly, monomer. Zn(2+) serves as cofactor.

The protein localises to the secreted. Its function is as follows. Probable extracellular aminopeptidase which contributes to pathogenicity. The protein is Probable leucine aminopeptidase MCYG_08380 of Arthroderma otae (strain ATCC MYA-4605 / CBS 113480) (Microsporum canis).